Reading from the N-terminus, the 378-residue chain is MGWIPCSGKSSGRNKTRRNGDHKLDRKSSDCSVSTSEKSRAKSSLSESKSKGSDHIVAQTFTFSELATATRNFRKECLIGEGGFGRVYKGYLASTSQTAAIKQLDHNGLQGNREFLVEVLMLSLLHHPNLVNLIGYCADGDQRLLVYEYMPLGSLEDHLHDISPGKQPLDWNTRMKIAAGAAKGLEYLHDKTMPPVIYRDLKCSNILLDDDYFPKLSDFGLAKLGPVGDKSHVSTRVMGTYGYCAPEYAMTGQLTLKSDVYSFGVVLLEIITGRKAIDSSRSTGEQNLVAWARPLFKDRRKFSQMADPMLQGQYPPRGLYQALAVAAMCVQEQPNLRPLIADVVTALSYLASQKFDPLAQPVQGSLFAPGTPPRSKRV.

Positions Met-1–Lys-49 are disordered. The N-myristoyl glycine moiety is linked to residue Gly-2. A compositionally biased stretch (basic and acidic residues) spans Arg-18 to Ser-29. Low complexity predominate over residues Ser-32–Glu-47. Phosphothreonine is present on Thr-62. The region spanning Phe-73 to Leu-350 is the Protein kinase domain. ATP is bound by residues Ile-79 to Val-87 and Lys-102. Phosphotyrosine is present on Tyr-147. The active-site Proton acceptor is Asp-200. Residues Ser-204 and Ser-234 each carry the phosphoserine modification. Residues Thr-235 and Thr-240 each carry the phosphothreonine modification. Position 248 is a phosphotyrosine (Tyr-248).

This sequence belongs to the protein kinase superfamily. Ser/Thr protein kinase family. Interacts with BSU1 and BSL1. Post-translationally, phosphorylated at Ser-43, Ser-46 and Ser-234. In terms of tissue distribution, widely expressed.

The protein resides in the cell membrane. It carries out the reaction L-seryl-[protein] + ATP = O-phospho-L-seryl-[protein] + ADP + H(+). The enzyme catalyses L-threonyl-[protein] + ATP = O-phospho-L-threonyl-[protein] + ADP + H(+). In terms of biological role, serine/threonine-protein kinase involved in the positive regulation of brassinosteroid (BR) signaling and plant growth. Phosphorylates both BSU1 and BSL1 in vitro. In Arabidopsis thaliana (Mouse-ear cress), this protein is Probable serine/threonine-protein kinase PBL7.